The chain runs to 465 residues: ATP synthase subunit beta (465 aa).

148-155 (GGAGVGKT) is a binding site for ATP.

It belongs to the ATPase alpha/beta chains family. F-type ATPases have 2 components, CF(1) - the catalytic core - and CF(0) - the membrane proton channel. CF(1) has five subunits: alpha(3), beta(3), gamma(1), delta(1), epsilon(1). CF(0) has three main subunits: a(1), b(2) and c(9-12). The alpha and beta chains form an alternating ring which encloses part of the gamma chain. CF(1) is attached to CF(0) by a central stalk formed by the gamma and epsilon chains, while a peripheral stalk is formed by the delta and b chains.

It localises to the cell inner membrane. The enzyme catalyses ATP + H2O + 4 H(+)(in) = ADP + phosphate + 5 H(+)(out). In terms of biological role, produces ATP from ADP in the presence of a proton gradient across the membrane. The catalytic sites are hosted primarily by the beta subunits. The sequence is that of ATP synthase subunit beta from Neisseria gonorrhoeae (strain ATCC 700825 / FA 1090).